A 257-amino-acid polypeptide reads, in one-letter code: GTP cyclohydrolase FolE2 (257 aa).

Belongs to the GTP cyclohydrolase IV family.

The catalysed reaction is GTP + H2O = 7,8-dihydroneopterin 3'-triphosphate + formate + H(+). It functions in the pathway cofactor biosynthesis; 7,8-dihydroneopterin triphosphate biosynthesis; 7,8-dihydroneopterin triphosphate from GTP: step 1/1. Its function is as follows. Converts GTP to 7,8-dihydroneopterin triphosphate. This is GTP cyclohydrolase FolE2 from Pelobacter propionicus (strain DSM 2379 / NBRC 103807 / OttBd1).